The chain runs to 124 residues: Large ribosomal subunit protein uL18 (124 aa).

The protein belongs to the universal ribosomal protein uL18 family. In terms of assembly, part of the 50S ribosomal subunit; part of the 5S rRNA/L5/L18/L25 subcomplex. Contacts the 5S and 23S rRNAs.

Its function is as follows. This is one of the proteins that bind and probably mediate the attachment of the 5S RNA into the large ribosomal subunit, where it forms part of the central protuberance. This is Large ribosomal subunit protein uL18 from Koribacter versatilis (strain Ellin345).